A 291-amino-acid chain; its full sequence is Homoserine kinase (291 aa).

80–90 contacts ATP; the sequence is RPSSGLGSSAA.

It belongs to the GHMP kinase family. Homoserine kinase subfamily.

The protein resides in the cytoplasm. The catalysed reaction is L-homoserine + ATP = O-phospho-L-homoserine + ADP + H(+). Its pathway is amino-acid biosynthesis; L-threonine biosynthesis; L-threonine from L-aspartate: step 4/5. In terms of biological role, catalyzes the ATP-dependent phosphorylation of L-homoserine to L-homoserine phosphate. This chain is Homoserine kinase, found in Haloquadratum walsbyi (strain DSM 16790 / HBSQ001).